A 183-amino-acid chain; its full sequence is Thioredoxin-like protein CITRX, chloroplastic (183 aa).

A chloroplast-targeting transit peptide spans 1–81 (MALVQSRTFP…REDYLVKKLS (81 aa)). The Thioredoxin domain occupies 82–183 (AQELQELVKG…MMHDIIDNEM (102 aa)). Catalysis depends on nucleophile residues C106 and C109. C106 and C109 are oxidised to a cystine.

It belongs to the thioredoxin family. Plant CITRX-type subfamily. As to quaternary structure, interacts with FLN1 and FLN2. Interacts with MRL7.

The protein resides in the plastid. It localises to the chloroplast. Its function is as follows. Thiol-disulfide oxidoreductase that plays a role in proper chloroplast development, most likely through regulating plastid-encoded polymerase (PEP) dependent chloroplast transcription. Acts as a component of the transcriptionally active plastid chromosome that is required for plastid gene expression. The chain is Thioredoxin-like protein CITRX, chloroplastic from Arabidopsis thaliana (Mouse-ear cress).